A 440-amino-acid polypeptide reads, in one-letter code: Protein root UVB sensitive 3 (440 aa).

The next 3 helical transmembrane spans lie at 109–129, 154–174, and 232–252; these read IGATFQWFLRDFTGMLGGILF, IGMLMDLLSPLFPSAFIVVVC, and FTSGNPMAIWLSFLSLTVFHM.

It belongs to the RUS1 family.

The protein resides in the membrane. The sequence is that of Protein root UVB sensitive 3 from Arabidopsis thaliana (Mouse-ear cress).